Consider the following 941-residue polypeptide: PHD finger protein 14 (941 aa).

Positions 22–295 are disordered; that stretch reads DYDSSDDSDF…LSQSKSNEDS (274 aa). Phosphoserine is present on residues Ser-26 and Ser-29. A compositionally biased stretch (low complexity) spans 36 to 47; sequence ASDSEGSGNGSE. A compositionally biased stretch (acidic residues) spans 60–72; sequence DSEENILEEELNE. Basic and acidic residues-rich tracts occupy residues 74–85, 94–109, and 116–132; these read IQVKEEQLKNST, QLIK…NGER, and KEKE…EKAT. Ser-84 is modified (phosphoserine). A compositionally biased stretch (low complexity) spans 133–166; it reads VSDSAAASAAGTTPATSPPAVTSPSVPTTTTTTT. Residue Ser-189 is modified to Phosphoserine. Composition is skewed to acidic residues over residues 194-205 and 226-249; these read NAMDDYDSEDDN and DGDN…EGND. The residue at position 199 (Tyr-199) is a Phosphotyrosine. At Ser-201 the chain carries Phosphoserine. Thr-280 bears the Phosphothreonine mark. The span at 281–290 shows a compositional bias: polar residues; it reads NDSLTLSQSK. Residues Ser-283, Ser-287, Ser-291, Ser-295, and Ser-301 each carry the phosphoserine modification. A PHD-type 1 zinc finger spans residues 312–373; sequence ILICCVCLGD…PWFCDACKCG (62 aa). Residues Cys-315, Cys-318, Cys-332, Cys-335, His-340, and Cys-343 each coordinate Zn(2+). Ser-352 is subject to Phosphoserine. Residues Cys-367, Cys-370, Cys-378, Cys-381, His-398, Cys-401, Cys-434, Cys-437, Cys-451, Cys-456, His-461, Cys-464, Cys-488, and His-491 each coordinate Zn(2+). Residues 375–408 form a C2HC pre-PHD-type zinc finger; it reads SPSCELCPNQDGIFKETDAGRWVHIVCALYVPGV. The segment at 432–492 adopts a PHD-type 2 zinc-finger fold; it reads KECSFCEDPR…PFFAYCKQHA (61 aa). Ser-523 is subject to Phosphoserine. Positions 623–671 form a coiled coil; it reads MIQIQENMAEQKNIKDKLENEQEKLHVEYNKLCESLEELQNLNGKLRSE. The segment at 718-772 adopts a PHD-type 3 zinc-finger fold; the sequence is LYSCGICKKNHDQHLLLLCDTCKLHYHLGCLDPPLTRMPRKTKNSYWQCSECDQA. Zn(2+)-binding residues include Cys-721, Cys-724, Cys-736, Cys-739, His-744, Cys-747, Cys-766, and Cys-769. A phosphoserine mark is found at Ser-774, Ser-775, and Ser-828. A disordered region spans residues 804–855; the sequence is VPQDVPPEPKKIPIRNTRTRGRKRSFVPEEEKHEERVPRERRQRQSVLQKKP. The segment covering 829-843 has biased composition (basic and acidic residues); that stretch reads FVPEEEKHEERVPRE. The PHD-type 4 zinc finger occupies 861 to 914; sequence RTECSTCKGTGDNENLVRCDECRLCYHFGCLDPPLKKSPKQTGYGWICQECDSS. Zn(2+)-binding residues include Cys-864, Cys-867, Cys-879, Cys-882, His-887, Cys-890, Cys-908, and Cys-911. The disordered stretch occupies residues 912-941; that stretch reads DSSSSKEDENEAEKKNASQELSMEQKTPKK. A compositionally biased stretch (basic and acidic residues) spans 915 to 928; it reads SSKEDENEAEKKNA. A compositionally biased stretch (polar residues) spans 930–941; sequence QELSMEQKTPKK.

High levels detected in testis, lung and spleen and low levels in muscle, heart, intestine and kidney (at protein level). Widely expressed in adult with increased levels in intestine, colon and lung.

The protein localises to the nucleus. The protein resides in the chromosome. It is found in the cytoplasm. Functionally, histone-binding protein. Binds preferentially to unmodified histone H3 but can also bind to a lesser extent to histone H3 trimethylated at 'Lys-9' (H3K9me3) as well as to histone H3 monomethylated at 'Lys-27' (H3K27ac) and trimethylated at 'Lys-27' (H3K27me3). Represses PDGFRA expression, thus playing a role in regulation of mesenchymal cell proliferation. Suppresses the expression of CDKN1A/p21 by reducing the level of trimethylation of histone H3 'Lys-4', leading to enhanced proliferation of germinal center B cells. The protein is PHD finger protein 14 (Phf14) of Mus musculus (Mouse).